The primary structure comprises 403 residues: Putative queuine tRNA-ribosyltransferase (403 aa).

Aspartate 91 acts as the Proton acceptor in catalysis. Substrate is bound by residues aspartate 91–phenylalanine 95, aspartate 177, glutamine 218, and glycine 245. An RNA binding region spans residues glycine 275–aspartate 281. Residue aspartate 294 is the Nucleophile of the active site. Residues alanine 299–arginine 303 form an RNA binding; important for wobble base 34 recognition region. Positions 341, 343, 346, and 372 each coordinate Zn(2+).

The protein belongs to the queuine tRNA-ribosyltransferase family. Homodimer. Within each dimer, one monomer is responsible for RNA recognition and catalysis, while the other monomer binds to the replacement base PreQ1. Requires Zn(2+) as cofactor.

It carries out the reaction 7-aminomethyl-7-carbaguanine + guanosine(34) in tRNA = 7-aminomethyl-7-carbaguanosine(34) in tRNA + guanine. In terms of biological role, catalyzes the base-exchange of a guanine (G) residue with the queuine precursor 7-aminomethyl-7-deazaguanine (PreQ1) at position 34 (anticodon wobble position) in tRNAs with GU(N) anticodons (tRNA-Asp, -Asn, -His and -Tyr). Catalysis occurs through a double-displacement mechanism. The nucleophile active site attacks the C1' of nucleotide 34 to detach the guanine base from the RNA, forming a covalent enzyme-RNA intermediate. The proton acceptor active site deprotonates the incoming PreQ1, allowing a nucleophilic attack on the C1' of the ribose to form the product. After dissociation, two additional enzymatic reactions on the tRNA convert PreQ1 to queuine (Q), resulting in the hypermodified nucleoside queuosine (7-(((4,5-cis-dihydroxy-2-cyclopenten-1-yl)amino)methyl)-7-deazaguanosine). This is Putative queuine tRNA-ribosyltransferase from Archaeoglobus fulgidus (strain ATCC 49558 / DSM 4304 / JCM 9628 / NBRC 100126 / VC-16).